The sequence spans 465 residues: Tapasin (465 aa).

Residues 1 to 23 (MKPLLLLVAVALGLATVVSVVSA) form the signal peptide. Residues 24–416 (GPEAIECWFV…GFSGPSIEDG (393 aa)) are Lumenal-facing. Cysteines 30 and 94 form a disulfide. An N-linked (GlcNAc...) asparagine glycan is attached at N256. The 108-residue stretch at 295–402 (PRVSLTPAPV…PASGRSADVT (108 aa)) folds into the Ig-like C1-type domain. C318 and C385 form a disulfide bridge. Residues 417 to 437 (IGLFLSAFLLLGLLKVLGWLA) form a helical membrane-spanning segment. The Cytoplasmic segment spans residues 438-465 (AYWTIPEVSKEKATAASLTIPRNSKKSQ).

As to quaternary structure, heterodimer with PDIA3; disulfide-linked. Obligatory mediator for the interaction between newly assembled MHC class I molecules, calreticulin, PDIA3 and TAP. Up to 4 MHC class I/tapasin complexes bind to 1 TAP. Interacts with HLA-G-B2M complex; this interaction is required for loading of high affinity peptides. On its own or as part of MHC class I peptide loading complex, interacts with ligand-free MR1 or MR1-B2M complex, providing for stable MR1 pools ready for metabolite antigen processing.

It is found in the endoplasmic reticulum membrane. Involved in the association of MHC class I with transporter associated with antigen processing (TAP) and in the assembly of MHC class I with peptide (peptide loading). This chain is Tapasin (Tapbp), found in Mus musculus (Mouse).